The sequence spans 302 residues: UDP-N-acetylenolpyruvoylglucosamine reductase (302 aa).

Positions 23-188 (KVGGNAEIFF…LKAVFKVNKG (166 aa)) constitute an FAD-binding PCMH-type domain. Arginine 168 is an active-site residue. The active-site Proton donor is the serine 217. The active site involves glutamate 287.

It belongs to the MurB family. It depends on FAD as a cofactor.

Its subcellular location is the cytoplasm. The enzyme catalyses UDP-N-acetyl-alpha-D-muramate + NADP(+) = UDP-N-acetyl-3-O-(1-carboxyvinyl)-alpha-D-glucosamine + NADPH + H(+). Its pathway is cell wall biogenesis; peptidoglycan biosynthesis. Functionally, cell wall formation. The protein is UDP-N-acetylenolpyruvoylglucosamine reductase of Rickettsia bellii (strain RML369-C).